Reading from the N-terminus, the 356-residue chain is sn-glycerol-3-phosphate import ATP-binding protein UgpC (356 aa).

The region spanning 4 to 235 (LKLQAVTKSW…PASLFVASFI (232 aa)) is the ABC transporter domain. Residue 37–44 (GPSGCGKS) participates in ATP binding.

This sequence belongs to the ABC transporter superfamily. sn-glycerol-3-phosphate importer (TC 3.A.1.1.3) family. In terms of assembly, the complex is composed of two ATP-binding proteins (UgpC), two transmembrane proteins (UgpA and UgpE) and a solute-binding protein (UgpB).

The protein resides in the cell inner membrane. The enzyme catalyses sn-glycerol 3-phosphate(out) + ATP + H2O = sn-glycerol 3-phosphate(in) + ADP + phosphate + H(+). It catalyses the reaction glycerol 2-phosphate(out) + ATP + H2O = glycerol 2-phosphate(in) + ADP + phosphate + H(+). Its activity is regulated as follows. ATPase activity is stimulated when UgpB is bound to G3P. Transport is inhibited in vivo by increasing levels of internal phosphate. However, ATPase activity in proteoliposomes is neither inhibited by phosphate nor by the signal transducing protein PhoU or the phosphodiesterase UgpQ. Activated by gluconate and inhibited by fumarate. Part of the ABC transporter complex UgpBAEC involved in sn-glycerol-3-phosphate (G3P) import. Responsible for energy coupling to the transport system. Can also transport glycerophosphoryl diesters, which are hydrolyzed to G3P and alcohol during transport. The G3P moiety can be detected in the cytoplasm whereas the corresponding alcohol is usually found in the culture medium. It was proposed by Yang et al that the complex could also transport glycerol-2-phosphate (G2P) in vivo, but it was shown later by Wuttge et al that UgpB does not bind G2P, questioning this transport activity. G2P might be converted in the periplasm to G3P before its transport. The polypeptide is sn-glycerol-3-phosphate import ATP-binding protein UgpC (Escherichia coli (strain K12)).